The following is a 767-amino-acid chain: Syn-copalyl diphosphate synthase (767 aa).

Residues 45–74 (GPMLISKSPPYPASEETREWEAEGQHEHTD) form a disordered region. Residues 59–74 (EETREWEAEGQHEHTD) show a composition bias toward basic and acidic residues. A substrate-binding site is contributed by K233. The Mg(2+) site is built by D365 and D367. The DXDD motif motif lies at 365 to 368 (DIDD). Position 453 (K453) interacts with substrate.

It depends on Mg(2+) as a cofactor.

It carries out the reaction (2E,6E,10E)-geranylgeranyl diphosphate = 9alpha-copalyl diphosphate. In terms of biological role, catalyzes the conversion of geranylgeranyl diphosphate to the phytoalexin precursor syn-copalyl diphosphate. This Oryza sativa subsp. indica (Rice) protein is Syn-copalyl diphosphate synthase (CPS4).